Here is an 89-residue protein sequence, read N- to C-terminus: Phosphocarrier protein HPr (89 aa).

Residues M1–D88 form the HPr domain. Residue H15 is the Pros-phosphohistidine intermediate of the active site. Residue S46 is modified to Phosphoserine; by HPrK/P.

It belongs to the HPr family.

The protein resides in the cytoplasm. With respect to regulation, phosphorylation on Ser-46 inhibits the phosphoryl transfer from enzyme I to HPr. In terms of biological role, general (non sugar-specific) component of the phosphoenolpyruvate-dependent sugar phosphotransferase system (sugar PTS). This major carbohydrate active-transport system catalyzes the phosphorylation of incoming sugar substrates concomitantly with their translocation across the cell membrane. The phosphoryl group from phosphoenolpyruvate (PEP) is transferred to the phosphoryl carrier protein HPr by enzyme I. Phospho-HPr then transfers it to the PTS EIIA domain. In Xylella fastidiosa (strain Temecula1 / ATCC 700964), this protein is Phosphocarrier protein HPr (ptsH).